Reading from the N-terminus, the 1219-residue chain is Myosin-5 (1219 aa).

Positions 1–12 are enriched in basic residues; sequence MAILKRGARKKV. The interval 1–20 is disordered; that stretch reads MAILKRGARKKVHQEPAKRS. Residues 36–715 form the Myosin motor domain; it reads VGVSDLTLLS…TLFALEHMRD (680 aa). 129-136 contacts ATP; sequence GESGAGKT. S357 bears the Phosphoserine mark. Y359 is subject to Phosphotyrosine. The segment at 404 to 486 is actin-binding; sequence SIGILDIYGF…PGIFAAMNDS (83 aa). IQ domains are found at residues 719-739 and 740-765; these read HNMAARIQRAWRRFLQRRIDA and ATKIQRTIRERKEGNKYEKLRDYGTK. The region spanning 771 to 961 is the TH1 domain; that stretch reads KERRSMSLLG…TISVRRGNPP (191 aa). S777 bears the Phosphoserine mark. Over residues 951 to 964 the composition is skewed to polar residues; that stretch reads STISVRRGNPPNSQ. Disordered stretches follow at residues 951–1106 and 1139–1167; these read STIS…SELP and TAYMKPHSGNNNIPTPPQNRDVPKPVLNS. Residues 974–984 are compositionally biased toward low complexity; the sequence is SISSGYHASSS. S992 is modified (phosphoserine). Positions 1030–1041 are enriched in polar residues; it reads NPASTLTASQSN. Low complexity predominate over residues 1048-1063; that stretch reads TAATRATPAATPAAAA. Over residues 1072–1083 the composition is skewed to pro residues; the sequence is IPPPPPPPPPSS. The SH3 domain occupies 1085–1147; the sequence is PKEPMFEAAY…PTAYMKPHSG (63 aa). S1205 carries the phosphoserine modification.

This sequence belongs to the TRAFAC class myosin-kinesin ATPase superfamily. Myosin family. As to quaternary structure, interacts (via myosin motor domain) with SHE4; this interaction is important for proper localization and may regulate the interaction of the motor domain with actin. Interacts (via SH3 domain) with VRP1; this interaction is required for localization to sites of polarized growth and may regulate the interaction of the tail domain with actin. Interacts (via SH3 domain) with PAN1; this interaction is important for late stages of endocytopsis. Interacts (via SH3 domain) with BBC1 and LAS17. Interacts (via C-terminal acidic tail) with ARC19 and ARC40; ARC19 and ARC40 are Arp2/3 complex subunits. Interacts with BZZ1, PKH1, PKH2, YPK1 and YPK2. In terms of processing, phosphorylation of the TEDS site (Ser-357) is required for the polarization of the actin cytoskeleton and for ligand-induced, but not for constitutive internalization of STE2. Phosphorylation probably activates the myosin-I ATPase activity. Ser-357 is phosphorylated by YPK2 in vitro.

It is found in the cytoplasm. Its subcellular location is the cytoskeleton. The protein resides in the actin patch. One of two redundant type-I myosins implicated in the organization of the actin cytoskeleton. Required for proper actin cytoskeleton polarization and for the internalization step in endocytosis. At the cell cortex, assembles in patch-like structures together with proteins from the actin-polymerizing machinery and promotes actin assembly. Functions redundantly with LAS17 as actin nucleation-promoting factor (NPF) for the Arp2/3 complex. Motor domain phosphorylation by PAK kinases CLA4 and STE20 promotes CDC42-regulated actin assembly. Functions together with the NPF PAN1 in late stages of endocytosis. Motor domain phosphorylation by PDK1 kinases PKH1 and PKH2, and by SGK kinases YPK1 and YPK2, promotes ligand-induced, but not constitutive endocytosis of the G protein-coupled receptor STE2. This is Myosin-5 (MYO5) from Saccharomyces cerevisiae (strain YJM789) (Baker's yeast).